Here is a 120-residue protein sequence, read N- to C-terminus: MMAEAKTGAKATKSAAAGAADGASKEKGPKHTPSPPKPSGRRKTRIGYVVSDKMQKTIVVELEDRVRHPLYGKIIRTTKKVKVHDEHSAAGIGDRVSLMETRPLSATKRWRLVEILEKAK.

A compositionally biased stretch (low complexity) spans Met1 to Gly22. The interval Met1–Ile46 is disordered.

This sequence belongs to the universal ribosomal protein uS17 family. Part of the 30S ribosomal subunit.

Functionally, one of the primary rRNA binding proteins, it binds specifically to the 5'-end of 16S ribosomal RNA. The chain is Small ribosomal subunit protein uS17 from Mycobacterium ulcerans (strain Agy99).